The chain runs to 1060 residues: Carbamoyl phosphate synthase large chain (1060 aa).

Positions 1-401 are carboxyphosphate synthetic domain; it reads MPKRTDIRKI…SLLKACRSLE (401 aa). Residues Arg129, Arg169, Gly175, Gly176, Arg208, Ile210, Glu215, Gly241, Ile242, His243, Gln284, and Glu298 each contribute to the ATP site. Residues 133–327 enclose the ATP-grasp 1 domain; it reads KQLMEELNQP…IAKLAAKIAV (195 aa). 3 residues coordinate Mg(2+): Gln284, Glu298, and Asn300. Gln284, Glu298, and Asn300 together coordinate Mn(2+). Residues 402–546 are oligomerization domain; it reads IGVDHIKIAD…YSTYAVENES (145 aa). Residues 547–929 form a carbamoyl phosphate synthetic domain region; the sequence is LISDKASILV…ALYKAFEAAY (383 aa). Residues 671-861 form the ATP-grasp 2 domain; it reads EATLQALNIP…MAQVATKVIL (191 aa). ATP is bound by residues Arg707, Ala746, Leu748, Glu752, Gly777, Val778, His779, Ser780, Gln820, and Glu832. Residues Gln820, Glu832, and Asn834 each coordinate Mg(2+). The Mn(2+) site is built by Gln820, Glu832, and Asn834. The MGS-like domain maps to 930–1060; it reads LHMPDYGNIV…SRAFTLKVLD (131 aa). Residues 930 to 1060 are allosteric domain; that stretch reads LHMPDYGNIV…SRAFTLKVLD (131 aa).

Belongs to the CarB family. In terms of assembly, composed of two chains; the small (or glutamine) chain promotes the hydrolysis of glutamine to ammonia, which is used by the large (or ammonia) chain to synthesize carbamoyl phosphate. Tetramer of heterodimers (alpha,beta)4. The cofactor is Mg(2+). Mn(2+) serves as cofactor.

It carries out the reaction hydrogencarbonate + L-glutamine + 2 ATP + H2O = carbamoyl phosphate + L-glutamate + 2 ADP + phosphate + 2 H(+). The catalysed reaction is hydrogencarbonate + NH4(+) + 2 ATP = carbamoyl phosphate + 2 ADP + phosphate + 2 H(+). Its pathway is amino-acid biosynthesis; L-arginine biosynthesis; carbamoyl phosphate from bicarbonate: step 1/1. The protein operates within pyrimidine metabolism; UMP biosynthesis via de novo pathway; (S)-dihydroorotate from bicarbonate: step 1/3. Its function is as follows. Large subunit of the glutamine-dependent carbamoyl phosphate synthetase (CPSase). CPSase catalyzes the formation of carbamoyl phosphate from the ammonia moiety of glutamine, carbonate, and phosphate donated by ATP, constituting the first step of 2 biosynthetic pathways, one leading to arginine and/or urea and the other to pyrimidine nucleotides. The large subunit (synthetase) binds the substrates ammonia (free or transferred from glutamine from the small subunit), hydrogencarbonate and ATP and carries out an ATP-coupled ligase reaction, activating hydrogencarbonate by forming carboxy phosphate which reacts with ammonia to form carbamoyl phosphate. This Streptococcus agalactiae serotype III (strain NEM316) protein is Carbamoyl phosphate synthase large chain.